Here is a 216-residue protein sequence, read N- to C-terminus: Somatotropin (216 aa).

An N-terminal signal peptide occupies residues 1–26; that stretch reads MAAGPRTSMLLAFALLCLPWTQEVGA. His-45 lines the Zn(2+) pocket. The cysteines at positions 78 and 189 are disulfide-linked. Phosphoserine is present on Ser-131. Glu-198 lines the Zn(2+) pocket. Cysteines 206 and 214 form a disulfide.

The protein belongs to the somatotropin/prolactin family.

It is found in the secreted. Plays an important role in growth control. Its major role in stimulating body growth is to stimulate the liver and other tissues to secrete IGF1. It stimulates both the differentiation and proliferation of myoblasts. It also stimulates amino acid uptake and protein synthesis in muscle and other tissues. The protein is Somatotropin (GH1) of Balaenoptera physalus (Fin whale).